The primary structure comprises 138 residues: Putative pre-16S rRNA nuclease (138 aa).

Belongs to the YqgF nuclease family.

It is found in the cytoplasm. Could be a nuclease involved in processing of the 5'-end of pre-16S rRNA. The chain is Putative pre-16S rRNA nuclease from Geobacillus sp. (strain WCH70).